The following is a 103-amino-acid chain: MSTTPETADFTEWQQVVDLLRQAALEQKDDVMLKLLLTPDEREALLARVNILHELMNGQRSQRKISELLGVGVATITRGSNELKHQSDDTKEWLASLLKKQQQ.

Residues 62–85 (QRKISELLGVGVATITRGSNELKH) mediate DNA binding.

The protein belongs to the TrpR family. In terms of assembly, homodimer.

The protein resides in the cytoplasm. Functionally, this protein is an aporepressor. When complexed with L-tryptophan it binds the operator region of the trp operon and prevents the initiation of transcription. This Photobacterium profundum (strain SS9) protein is Trp operon repressor homolog.